A 194-amino-acid polypeptide reads, in one-letter code: MNNVLVLKSSISGNNSQTNQLADYVIEKLQGNHIVVRDLAQQPLPYFDTVAAIAVRGEPKTTEEKQLLALSDELIEELKNAQTLIIGAPMYNLNIPTQLKSYFDFIARPRVTFQYTAKGPEGLLKGKKAIVLCAFGGLYDEENLVTQYMKSILGFIGITDVQFVYAQGIGLGAEAIEKAQSSAKNKINELITSL.

FMN-binding positions include Ser10 and Met90–Leu93.

This sequence belongs to the azoreductase type 1 family. Homodimer. FMN is required as a cofactor.

It carries out the reaction 2 a quinone + NADH + H(+) = 2 a 1,4-benzosemiquinone + NAD(+). It catalyses the reaction N,N-dimethyl-1,4-phenylenediamine + anthranilate + 2 NAD(+) = 2-(4-dimethylaminophenyl)diazenylbenzoate + 2 NADH + 2 H(+). Its function is as follows. Quinone reductase that provides resistance to thiol-specific stress caused by electrophilic quinones. Also exhibits azoreductase activity. Catalyzes the reductive cleavage of the azo bond in aromatic azo compounds to the corresponding amines. This Haemophilus influenzae (strain PittEE) protein is FMN-dependent NADH:quinone oxidoreductase.